Consider the following 354-residue polypeptide: Guanine nucleotide-binding protein G(i) subunit alpha-1 (354 aa).

Glycine 2 carries N-myristoyl glycine lipidation. Cysteine 3 carries S-palmitoyl cysteine lipidation. Residues 32-354 (REVKLLLLGA…KNNLKDCGLF (323 aa)) enclose the G-alpha domain. Positions 35-48 (KLLLLGAGESGKST) are G1 motif. GTP-binding positions include 43–48 (ESGKST), 150–151 (DS), and 175–178 (LRTR). Serine 47 serves as a coordination point for Mg(2+). The interval 173–181 (DVLRTRVKT) is G2 motif. Threonine 181 contributes to the Mg(2+) binding site. Positions 196 to 205 (FKMFDVGGQR) are G3 motif. Residues 200–204 (DVGGQ), 269–272 (NKKD), and alanine 326 contribute to the GTP site. The interval 265-272 (ILFLNKKD) is G4 motif. The tract at residues 324 to 329 (TCATDT) is G5 motif.

Belongs to the G-alpha family. G(i/o/t/z) subfamily. As to quaternary structure, heterotrimeric G proteins are composed of 3 units; alpha, beta and gamma. The alpha chain contains the guanine nucleotide binding site. Part of a spindle orientation complex. Identified in complex with the beta subunit GNB1 and the gamma subunit GNG1. Identified in complex with the beta subunit GNB1 and the gamma subunit GNG2. GTP binding causes dissociation of the heterotrimer, liberating the individual subunits so that they can interact with downstream effector proteins. Post-translationally, myristoylation at Gly-2 is required for membrane anchoring before palmitoylation. Palmitoylation at Cys-3 varies with membrane lipid composition.

It localises to the nucleus. The protein localises to the cytoplasm. The protein resides in the cell membrane. Its subcellular location is the cytoskeleton. It is found in the microtubule organizing center. It localises to the centrosome. The protein localises to the cell cortex. The protein resides in the membrane. It carries out the reaction GTP + H2O = GDP + phosphate + H(+). Guanine nucleotide-binding proteins (G proteins) function as transducers downstream of G protein-coupled receptors (GPCRs) in numerous signaling cascades. The alpha chain contains the guanine nucleotide binding site and alternates between an active, GTP-bound state and an inactive, GDP-bound state. Signaling by an activated GPCR promotes GDP release and GTP binding. The alpha subunit has a low GTPase activity that converts bound GTP to GDP, thereby terminating the signal. Both GDP release and GTP hydrolysis are modulated by numerous regulatory proteins. Signaling is mediated via effector proteins, such as adenylate cyclase. Inhibits adenylate cyclase activity, leading to decreased intracellular cAMP levels. Required for cortical dynein-dynactin complex recruitment during metaphase. The protein is Guanine nucleotide-binding protein G(i) subunit alpha-1 (gnai1) of Oryzias latipes (Japanese rice fish).